Here is a 92-residue protein sequence, read N- to C-terminus: DNA-directed RNA polymerase subunit Rpo11 (92 aa).

Belongs to the archaeal Rpo11/eukaryotic RPB11/RPC19 RNA polymerase subunit family. Part of the RNA polymerase complex.

Its subcellular location is the cytoplasm. The catalysed reaction is RNA(n) + a ribonucleoside 5'-triphosphate = RNA(n+1) + diphosphate. Functionally, DNA-dependent RNA polymerase (RNAP) catalyzes the transcription of DNA into RNA using the four ribonucleoside triphosphates as substrates. The polypeptide is DNA-directed RNA polymerase subunit Rpo11 (Methanosarcina mazei (strain ATCC BAA-159 / DSM 3647 / Goe1 / Go1 / JCM 11833 / OCM 88) (Methanosarcina frisia)).